Here is a 377-residue protein sequence, read N- to C-terminus: Probable isocitrate dehydrogenase [NAD] subunit alpha, mitochondrial (377 aa).

Substrate-binding residues include Arg-131, Arg-141, Arg-162, and Asp-249. Mg(2+) is bound by residues Asp-249, Asp-273, and Asp-277.

Belongs to the isocitrate and isopropylmalate dehydrogenases family. As to quaternary structure, heterooligomer of subunits alpha, beta, and gamma in the apparent ratio of 2:1:1. It depends on Mg(2+) as a cofactor. Mn(2+) is required as a cofactor.

Its subcellular location is the mitochondrion. It catalyses the reaction D-threo-isocitrate + NAD(+) = 2-oxoglutarate + CO2 + NADH. Probable catalytic subunit of the enzyme which catalyzes the decarboxylation of isocitrate (ICT) into alpha-ketoglutarate. The polypeptide is Probable isocitrate dehydrogenase [NAD] subunit alpha, mitochondrial (Drosophila melanogaster (Fruit fly)).